Consider the following 439-residue polypeptide: Microfibrillar-associated protein 1 (439 aa).

Positions 1 to 17 are enriched in polar residues; that stretch reads MSVPSSLMKQPPIQSTA. A disordered region spans residues 1–200; that stretch reads MSVPSSLMKQ…SEDEMEPRLK (200 aa). Ser2 is subject to N-acetylserine. A compositionally biased stretch (basic and acidic residues) spans 23-34; that stretch reads RNEKGEISMEKV. Residues Ser52 and Ser53 each carry the phosphoserine modification. A compositionally biased stretch (basic and acidic residues) spans 61 to 70; sequence QFIKKAKEQE. A Glycyl lysine isopeptide (Lys-Gly) (interchain with G-Cter in SUMO2) cross-link involves residue Lys67. Residues 71 to 81 show a composition bias toward acidic residues; that stretch reads AEPEEQEEDSS. Ser94, Ser116, Ser118, Ser132, and Ser133 each carry phosphoserine. Composition is skewed to acidic residues over residues 112-122 and 131-144; these read VVGESDSEVEG and DSSE…DEEE. Positions 145-163 are enriched in basic and acidic residues; the sequence is IERRRGMMRQRAQERKNEE. The segment covering 178 to 195 has biased composition (acidic residues); sequence ESESESEYEEYTDSEDEM. Lys249 participates in a covalent cross-link: Glycyl lysine isopeptide (Lys-Gly) (interchain with G-Cter in SUMO2). At Thr267 the chain carries Phosphothreonine. Lys357 is covalently cross-linked (Glycyl lysine isopeptide (Lys-Gly) (interchain with G-Cter in SUMO2)). Residue Ser361 is modified to Phosphoserine. Residues Lys371, Lys381, Lys415, and Lys418 each participate in a glycyl lysine isopeptide (Lys-Gly) (interchain with G-Cter in SUMO2) cross-link. Ser432 carries the phosphoserine modification.

It belongs to the MFAP1 family. Component of the spliceosome B complex. Interacts with PRPF38A (via N-terminal interaction domain).

Its subcellular location is the nucleus. Its function is as follows. Involved in pre-mRNA splicing as a component of the spliceosome. The chain is Microfibrillar-associated protein 1 from Bos taurus (Bovine).